Consider the following 805-residue polypeptide: 1,4-alpha-glucan-branching enzyme 2-2, chloroplastic/amyloplastic (805 aa).

The transit peptide at 1–32 (MVVIHGVSLTPRFTLPSRPLNTGFNAGNSTLS) directs the protein to the chloroplast. D451 functions as the Nucleophile in the catalytic mechanism. The Proton donor role is filled by E506.

This sequence belongs to the glycosyl hydrolase 13 family. GlgB subfamily. As to quaternary structure, monomer. As to expression, expressed in seedlings, roots, stems, leaves, inflorescences, seeds and flowers.

It localises to the plastid. Its subcellular location is the chloroplast stroma. The protein resides in the amyloplast. The enzyme catalyses Transfers a segment of a (1-&gt;4)-alpha-D-glucan chain to a primary hydroxy group in a similar glucan chain.. It functions in the pathway glycan biosynthesis; starch biosynthesis. Catalyzes the formation of the alpha-1,6-glucosidic linkages in starch by scission of a 1,4-alpha-linked oligosaccharide from growing alpha-1,4-glucan chains and the subsequent attachment of the oligosaccharide to the alpha-1,6 position. The polypeptide is 1,4-alpha-glucan-branching enzyme 2-2, chloroplastic/amyloplastic (SBE2.2) (Arabidopsis thaliana (Mouse-ear cress)).